A 204-amino-acid polypeptide reads, in one-letter code: High frequency lysogenization protein HflD homolog (204 aa).

It belongs to the HflD family.

The protein resides in the cytoplasm. It is found in the cell inner membrane. The polypeptide is High frequency lysogenization protein HflD homolog (Shewanella sediminis (strain HAW-EB3)).